Here is a 153-residue protein sequence, read N- to C-terminus: Natriuretic peptides A (153 aa).

Residues 1-25 (MGSFSTIMASFLLFLAFQLQGQTRA) form the signal peptide. Propeptides lie at residues 26–123 (NPVY…AAPR) and 93–103 (DGGALGRGSWD). A disordered region spans residues 54 to 105 (EDEVMPPQVLSDQSEEERAALSPLPEVPPWTGEVNPAQRDGGALGRGSWDSS). Ser-129 is modified (phosphoserine). Residues Cys-130 and Cys-146 are joined by a disulfide bond. The tract at residues 147-151 (NSFRY) is important for degradation of atrial natriuretic peptide by IDE.

Belongs to the natriuretic peptide family. In terms of assembly, homodimer; disulfide-linked antiparallel dimer. The precursor molecule is proteolytically cleaved by CORIN at Arg-123 to produce the atrial natriuretic peptide. Undergoes further proteolytic cleavage by unknown proteases to give rise to long-acting natriuretic peptide, vessel dilator and kaliuretic peptide. Additional processing gives rise to the auriculin and atriopeptin peptides. In the kidneys, alternative processing by an unknown protease results in the peptide urodilatin. Post-translationally, cleavage by MME initiates degradation of the factor and thereby regulates its activity. Degradation by IDE results in reduced activation of NPR1 (in vitro). During IDE degradation, the resulting products can temporarily stimulate NPR2 to produce cGMP, before the fragments are completely degraded and inactivated by IDE (in vitro). In terms of processing, degraded by IDE. Phosphorylation on Ser-129 decreases vasorelaxant activity.

Its subcellular location is the secreted. It localises to the perikaryon. It is found in the cell projection. In terms of biological role, hormone that plays a key role in mediating cardio-renal homeostasis, and is involved in vascular remodeling and regulating energy metabolism. Acts by specifically binding and stimulating NPR1 to produce cGMP, which in turn activates effector proteins, such as PRKG1, that drive various biological responses. Regulates vasodilation, natriuresis, diuresis and aldosterone synthesis and is therefore essential for regulating blood pressure, controlling the extracellular fluid volume and maintaining the fluid-electrolyte balance. Also involved in inhibiting cardiac remodeling and cardiac hypertrophy by inducing cardiomyocyte apoptosis and attenuating the growth of cardiomyocytes and fibroblasts. Plays a role in female pregnancy by promoting trophoblast invasion and spiral artery remodeling in uterus, and thus prevents pregnancy-induced hypertension. In adipose tissue, acts in various cGMP- and PKG-dependent pathways to regulate lipid metabolism and energy homeostasis. This includes up-regulating lipid metabolism and mitochondrial oxygen utilization by activating the AMP-activated protein kinase (AMPK), and increasing energy expenditure by acting via MAPK11 to promote the UCP1-dependent thermogenesis of brown adipose tissue. Binds the clearance receptor NPR3 which removes the hormone from circulation. Functionally, may have a role in cardio-renal homeostasis through regulation of natriuresis, diuresis, vasodilation, and inhibiting aldosterone synthesis. In vitro, promotes the production of cGMP and induces vasodilation. May promote natriuresis, at least in part, by enhancing prostaglandin E2 synthesis resulting in the inhibition of renal Na+-K+-ATPase. However reports on the involvement of this peptide in mammal blood volume and blood pressure homeostasis are conflicting; according to a report, in vivo it is not sufficient to activate cGMP and does not inhibit collecting duct transport nor effect diuresis and natriuresis. Appears to bind to specific receptors that are distinct from the receptors bound by atrial natriuretic peptide and vessel dilator. Possibly enhances protein excretion in urine by decreasing proximal tubular protein reabsorption. Its function is as follows. May have a role in cardio-renal homeostasis through regulation of natriuresis, diuresis, and vasodilation. In vitro, promotes the production of cGMP and induces vasodilation. May promote natriuresis, at least in part, by enhancing prostaglandin E2 synthesis resulting in the inhibition of renal Na+-K+-ATPase. However reports on the involvement of this peptide in mammal blood volume and blood pressure homeostasis are conflicting; according to a report it is not sufficient to activate cGMP and does not inhibit collecting duct transport nor effect diuresis and natriuresis. Appears to bind to specific receptors that are distinct from the receptors bound by the atrial natriuretic and long-acting natriuretic peptides. Possibly functions in protein excretion in urine by maintaining the integrity of the proximal tubules and enhancing protein excretion by decreasing proximal tubular protein reabsorption. May have a role in cardio-renal homeostasis through regulation of diuresis and inhibiting aldosterone synthesis. In vitro, promotes the production of cGMP and induces vasodilation. May promote natriuresis, at least in part, by enhancing prostaglandin E2 synthesis resulting in the inhibition of renal Na+-K+-ATPase. May have a role in potassium excretion but not sodium excretion (natriuresis). Possibly enhances protein excretion in urine by decreasing proximal tubular protein reabsorption. In terms of biological role, hormone produced in the kidneys that appears to be important for maintaining cardio-renal homeostasis. Mediates vasodilation, natriuresis and diuresis primarily in the renal system, in order to maintain the extracellular fluid volume and control the fluid-electrolyte balance. Specifically binds and stimulates cGMP production by renal transmembrane receptors, likely NPR1. Urodilatin not ANP, may be the natriuretic peptide responsible for the regulation of sodium and water homeostasis in the kidney. Functionally, may have a role in cardio-renal homeostasis through regulation of natriuresis and vasodilation. In vivo promotes natriuresis and in vitro, vasodilates renal artery strips. Its function is as follows. May have a role in cardio-renal homeostasis through regulation of regulation of natriuresis and vasodilation. In vivo promotes natriuresis. In vitro, vasodilates intestinal smooth muscle but not smooth muscle strips. May have a role in cardio-renal homeostasis through regulation of natriuresis and vasodilation. In vivo promotes natriuresis. In vitro, selectively vasodilates intestinal and vascular smooth muscle strips. In terms of biological role, may have a role in cardio-renal homeostasis through regulation of natriuresis and vasodilation. In vivo promotes natriuresis. In vitro, selectively vasodilates intestinal smooth muscle but not vascular smooth muscle strips. In Equus caballus (Horse), this protein is Natriuretic peptides A (NPPA).